The following is a 162-amino-acid chain: Deoxyuridine 5'-triphosphate nucleotidohydrolase (162 aa).

Serine 11 bears the Phosphoserine mark. DUTP is bound by residues 83–85, 97–103, glycine 108, arginine 151, and 156–157; these read RSG, GVIDEDY, and FG.

Belongs to the dUTPase family. In terms of assembly, homotrimer. Requires Mg(2+) as cofactor. Phosphorylated in vivo on Ser-11, a reaction that can be catalyzed in vitro by CDC2.

It localises to the nucleus. It carries out the reaction dUTP + H2O = dUMP + diphosphate + H(+). It participates in pyrimidine metabolism; dUMP biosynthesis; dUMP from dCTP (dUTP route): step 2/2. Catalyzes the cleavage of 2'-deoxyuridine 5'-triphosphate (dUTP) into 2'-deoxyuridine 5'-monophosphate (dUMP) and inorganic pyrophosphate and through its action efficiently prevents uracil misincorporation into DNA and at the same time provides dUMP, the substrate for de novo thymidylate biosynthesis. Inhibits peroxisome proliferator-activated receptor (PPAR) activity by binding of its N-terminal to PPAR, preventing the latter's dimerization with retinoid X receptor. Essential for embryonic development. This chain is Deoxyuridine 5'-triphosphate nucleotidohydrolase (Dut), found in Mus musculus (Mouse).